Here is a 227-residue protein sequence, read N- to C-terminus: Holliday junction branch migration complex subunit RuvA (227 aa).

The domain I stretch occupies residues 1-64 (MFESISGILT…EDALRLFGFS (64 aa)). The segment at 65–143 (NVQERTLFLS…LTDAASCAQS (79 aa)) is domain II. The tract at residues 144–158 (QTDDRAAHPSNLGCA) is flexible linker. Residues 159–227 (PHAREIEDLV…HPHAVAPAAE (69 aa)) form a domain III region.

Belongs to the RuvA family. As to quaternary structure, homotetramer. Forms an RuvA(8)-RuvB(12)-Holliday junction (HJ) complex. HJ DNA is sandwiched between 2 RuvA tetramers; dsDNA enters through RuvA and exits via RuvB. An RuvB hexamer assembles on each DNA strand where it exits the tetramer. Each RuvB hexamer is contacted by two RuvA subunits (via domain III) on 2 adjacent RuvB subunits; this complex drives branch migration. In the full resolvosome a probable DNA-RuvA(4)-RuvB(12)-RuvC(2) complex forms which resolves the HJ.

It localises to the cytoplasm. Its function is as follows. The RuvA-RuvB-RuvC complex processes Holliday junction (HJ) DNA during genetic recombination and DNA repair, while the RuvA-RuvB complex plays an important role in the rescue of blocked DNA replication forks via replication fork reversal (RFR). RuvA specifically binds to HJ cruciform DNA, conferring on it an open structure. The RuvB hexamer acts as an ATP-dependent pump, pulling dsDNA into and through the RuvAB complex. HJ branch migration allows RuvC to scan DNA until it finds its consensus sequence, where it cleaves and resolves the cruciform DNA. This chain is Holliday junction branch migration complex subunit RuvA, found in Treponema pallidum (strain Nichols).